Here is a 331-residue protein sequence, read N- to C-terminus: Tetraacyldisaccharide 4'-kinase (331 aa).

Residue 59 to 66 (FVGGTGKT) coordinates ATP.

It belongs to the LpxK family.

It catalyses the reaction a lipid A disaccharide + ATP = a lipid IVA + ADP + H(+). It participates in glycolipid biosynthesis; lipid IV(A) biosynthesis; lipid IV(A) from (3R)-3-hydroxytetradecanoyl-[acyl-carrier-protein] and UDP-N-acetyl-alpha-D-glucosamine: step 6/6. In terms of biological role, transfers the gamma-phosphate of ATP to the 4'-position of a tetraacyldisaccharide 1-phosphate intermediate (termed DS-1-P) to form tetraacyldisaccharide 1,4'-bis-phosphate (lipid IVA). In Alkalilimnicola ehrlichii (strain ATCC BAA-1101 / DSM 17681 / MLHE-1), this protein is Tetraacyldisaccharide 4'-kinase.